Here is a 706-residue protein sequence, read N- to C-terminus: F-box/WD repeat-containing protein 7 (706 aa).

Residues 1–157 (MNQELLSVGS…IVDLPIHQRS (157 aa)) form a disordered region. S26 carries the post-translational modification Phosphoserine. Basic and acidic residues predominate over residues 32–54 (QMNRVLEEEQQQPRHQEEEHAAR). The segment covering 69–83 (NDPQQGQLEENNNRF) has biased composition (polar residues). Residues 86 to 128 (VDEDSSGNQEEQEEDEEHAGEQDEEDEEEEEMDQESDDFDQSD) show a composition bias toward acidic residues. Residues 129-138 (DSSREDEHTH) show a composition bias toward basic and acidic residues. T204 carries the phosphothreonine modification. Position 226 is a phosphoserine (S226). The region spanning 277 to 323 (RDFISLLPKELALYVLSFLEPKDLLQAAQTCRYWRILAEDNLLWREK) is the F-box domain. WD repeat units lie at residues 377–417 (GHDD…RTLV), 419–455 (HTGGVWSSQMRDNIIISGSTDRTLKVWNAETGECIHT), 458–497 (GHTSTVRCMHLHEKRVVSGSRDATLRVWDIETGQCLHVLM), 499–535 (HVAAVRCVQYDGRRVVSGAYDFMVKVWDPETETCLHT), 538–577 (GHTNRVYSLQFDGIHVVSGSLDTSIRVWDVETGNCIHTLT), 579–617 (HQSLTSGMELKDNILVSGNADSTVKIWDIKTGQCLQTLQ), and 621–658 (KHQSAVTCLQFNKNFVITSSDDGTVKLWDLKTGEFIRN).

In terms of assembly, homodimer; homodimerization plays a role in substrate binding and/or ubiquitination and degradation. Component of the SCF(FBXW7) complex consisting of CUL1, RBX1, SKP1 and FBXW7. Interacts (via F-box domain) with SKP1. Interacts (via F-box domain) with pseudophosphatase STYX; the interaction is direct and prevents FBXW7 interaction with SKP1. Interacts with cyclin-E (CCNE1 or CCNE2). Interacts with PSEN1. Forms a trimeric complex with NOTCH1 and SGK1. Interacts with NOTCH1 intracellular domain/NICD and NOTCH4 intracellular domain/NICD. Interacts with NOTCH2 intracellular domain (N2ICD). Interacts with MYC (when phosphorylated). Interacts with USP28, counteracting ubiquitination of MYC. Interacts with JUN. Found in a complex with JUN and PRR7. Interacts with JUN and PRR7; the interaction inhibits ubiquitination-mediated JUN degradation, promoting its phosphorylation and transcriptional activity. Interacts (when phosphorylated at Thr-204) with PIN1, disrupting FBXW7 dimerization and promoting FBXW7 autoubiquitination and degradation. Interacts with UBE2QL1. Interacts with FAM83D; promotes FBXW7 degradation. Interacts with MYCN; FBXW7 competes with AURKA for binding to unphosphorylated MYCN but not for binding to phosphorylated MYCN. Interacts with STOML1. Interacts with NFE2L1. Interacts with USP36, counteracting ubiquitination of MYC. Interacts with RICTOR; mediates RICTOR ubiquitination and degradation.l Interacts with USP38, counteracting ubiquitination of MYC. As to quaternary structure, (Microbial infection) In case of infection, interacts with T.annulata PIN1 (TaPIN1); leading to FBXW7 autoubiquitination and subsequent degradation: FBXW7 degradation promotes stabilization of JUN, which promotes cell transformation. Post-translationally, phosphorylation at Thr-204 promotes interaction with PIN1, leading to disrupt FBXW7 dimerization and promoting FBXW7 autoubiquitination and degradation. Phosphorylated by ATM at Ser-26 in response to DNA damage, promoting recruitment to DNA damage sites and 'Lys-63'-linked ubiquitination of phosphorylated XRCC4. In terms of processing, ubiquitinated: autoubiquitinates following phosphorylation at Thr-204 and subsequent interaction with PIN1. Ubiquitination leads to its degradation.

It is found in the nucleus. The protein resides in the nucleoplasm. Its subcellular location is the chromosome. The protein operates within protein modification; protein ubiquitination. Functionally, substrate recognition component of a SCF (SKP1-CUL1-F-box protein) E3 ubiquitin-protein ligase complex which mediates the ubiquitination and subsequent proteasomal degradation of target proteins. Recognizes and binds phosphorylated sites/phosphodegrons within target proteins and thereafter brings them to the SCF complex for ubiquitination. Identified substrates include cyclin-E (CCNE1 or CCNE2), DISC1, JUN, MYC, NOTCH1 released notch intracellular domain (NICD), NOTCH2, MCL1, MLST8, RICTOR, and probably PSEN1. Acts as a negative regulator of JNK signaling by binding to phosphorylated JUN and promoting its ubiquitination and subsequent degradation. SCF(FBXW7) complex mediates the ubiquitination and subsequent degradation of NFE2L1. Involved in bone homeostasis and negative regulation of osteoclast differentiation. Also able to promote 'Lys-63'-linked ubiquitination in response to DNA damage. The SCF(FBXW7) complex facilitates double-strand break repair following phosphorylation by ATM: phosphorylation promotes localization to sites of double-strand breaks and 'Lys-63'-linked ubiquitination of phosphorylated XRCC4, enhancing DNA non-homologous end joining. The protein is F-box/WD repeat-containing protein 7 of Bos taurus (Bovine).